Consider the following 609-residue polypeptide: Proteasome-associated ATPase (609 aa).

The segment at 1–22 (MGESERSEAFNPPREAGMSSGD) is disordered. Residues 20-96 (SGDIAELEQL…LREEVDRLGQ (77 aa)) adopt a coiled-coil conformation. 296-301 (GCGKTL) contributes to the ATP binding site. The segment at 608–609 (YL) is docks into pockets in the proteasome alpha-ring.

This sequence belongs to the AAA ATPase family. As to quaternary structure, homohexamer. Assembles into a hexameric ring structure that caps the 20S proteasome core. Strongly interacts with the prokaryotic ubiquitin-like protein Pup through a hydrophobic interface; the interacting region of ARC lies in its N-terminal coiled-coil domain. There is one Pup binding site per ARC hexamer ring. Upon ATP-binding, the C-terminus of ARC interacts with the alpha-rings of the proteasome core, possibly by binding to the intersubunit pockets.

It participates in protein degradation; proteasomal Pup-dependent pathway. Functionally, ATPase which is responsible for recognizing, binding, unfolding and translocation of pupylated proteins into the bacterial 20S proteasome core particle. May be essential for opening the gate of the 20S proteasome via an interaction with its C-terminus, thereby allowing substrate entry and access to the site of proteolysis. Thus, the C-termini of the proteasomal ATPase may function like a 'key in a lock' to induce gate opening and therefore regulate proteolysis. This is Proteasome-associated ATPase from Mycobacterium leprae (strain Br4923).